We begin with the raw amino-acid sequence, 236 residues long: 2,3,4,5-tetrahydropyridine-2,6-dicarboxylate N-acetyltransferase (236 aa).

Belongs to the transferase hexapeptide repeat family. DapH subfamily.

It catalyses the reaction (S)-2,3,4,5-tetrahydrodipicolinate + acetyl-CoA + H2O = L-2-acetamido-6-oxoheptanedioate + CoA. It participates in amino-acid biosynthesis; L-lysine biosynthesis via DAP pathway; LL-2,6-diaminopimelate from (S)-tetrahydrodipicolinate (acetylase route): step 1/3. In terms of biological role, catalyzes the transfer of an acetyl group from acetyl-CoA to tetrahydrodipicolinate. In Brevibacillus brevis (strain 47 / JCM 6285 / NBRC 100599), this protein is 2,3,4,5-tetrahydropyridine-2,6-dicarboxylate N-acetyltransferase.